A 386-amino-acid chain; its full sequence is Acyl-CoA ligase lcsD (386 aa).

The tract at residues 62–132 is SBD1; that stretch reads ELEQTLLAIQ…ELLPACKIIQ (71 aa). Residue 107–115 participates in ATP binding; sequence AVGASGISK. Residues 133-195 form an SBD2 region; sequence GYGMTETTGV…LRSPSVVIGY (63 aa). Position 137 (Thr137) interacts with substrate. ATP contacts are provided by Asp216 and Arg235. Residues 243 to 245 and 313 to 316 each bind CoA; these read RGL and HLDG. An ATP-binding site is contributed by Lys331. Residues 352–386 are disordered; the sequence is REKAANGVHKVHVNGVKRPEKMEVFDLSSDDEDDD.

Belongs to the ATP-dependent AMP-binding enzyme family.

The protein operates within secondary metabolite biosynthesis. In terms of biological role, acyl-CoA ligase; part of the gene cluster that mediates the biosynthesis of the lipopeptide antibiotics leucinostatins that show extensive biological activities, including antimalarial, antiviral, antibacterial, antifungal, and antitumor activities, as well as phytotoxic. Leucinostatin A contains nine amino acid residues, including the unusual amino acid 4-methyl-L-proline (MePro), 2-amino-6-hydroxy-4-methyl-8-oxodecanoic acid (AHyMeOA), 3-hydroxyleucine (HyLeu), alpha-aminoisobutyric acid (AIB), beta-Ala, a 4-methylhex-2-enoic acid at the N-terminus as well as a N1,N1-dimethylpropane-1,2-diamine (DPD) at the C-terminus. The biosynthesis of leucinostatins is probably initiated with the assembly of 4-methylhex-2-enoic acid by a reducing PKS. Two reducing polyketide synthases, lcsB and lcsC, have been identified in the cluster and it is not clear which is the one that assembles 4-methylhex-2-enoic acid since both contain KS, AT, DH, cMT, ER, KR and ACP domains. The polyketide residue might be transferred to the NRPS lcsA, mediated by two additional enzymes, the acyl-CoA ligase lcsD and the thioesterase lcsE. The linear polyketide carboxylic acid, which is released from PKS, is converted to a CoA thioester by lcsD, and then lcsE hydrolyzes the thiol bond and shuttles the polyketide intermediate to lcsA. The C domain of the first module catalyzed the condensation of 4-methylhex-2-enoic acid and MePro carried by domain A1, followed by successive condensations of nine amino acids to trigger the elongation of the linear peptide. A5 and A6 domains of lcsA are proposed to incorporate leucine, A2 AHyMeOA, and A3 incorporates HyLeu. A4, A7 and A8 incorporate AIB. The AHyMeOA in leucinostatin A activated by the A2 might be produced by the second PKS (lcsB or lcsC) present within the cluster. The MePro is probably produced via leucine cyclization and may originate from a separate pathway, independent of the cluster. Another nonproteinogenic amino acid, beta-Ala, could be produced by an aspartic acid decarboxylase also localized outside of the cluster. Two candidates are VFPBJ_01400 and VFPBJ_10476. The final peptide scaffold may be released by the NAD(P)H-dependent thioester reductase (TE) at the C-terminal region of lcsA. Transamination of the lcsA product by the transaminase lcsP may produce DPD at the C-terminus. Further hydroxylation steps performed alternatively by the cytochrome P450 monooxygenases lcsI, lcsK and lcsN then yield the non-methylated leucinostatins precursor. It is also possible that leucines can be hydroxylated prior to their incorporation into the peptide. Varying extents of methylation then lead to the formation of leucinostatins A and B. In Purpureocillium lilacinum (Paecilomyces lilacinus), this protein is Acyl-CoA ligase lcsD.